A 155-amino-acid polypeptide reads, in one-letter code: Large ribosomal subunit protein uL15 (155 aa).

The segment covering 1 to 13 (MKLNELRDCEGAT) has biased composition (basic and acidic residues). Positions 1–47 (MKLNELRDCEGATKNRKRIGRGIGSGTGKTGGRGVKGQKSRSGVSLN) are disordered. Over residues 21–35 (RGIGSGTGKTGGRGV) the composition is skewed to gly residues.

It belongs to the universal ribosomal protein uL15 family. As to quaternary structure, part of the 50S ribosomal subunit.

In terms of biological role, binds to the 23S rRNA. In Bartonella tribocorum (strain CIP 105476 / IBS 506), this protein is Large ribosomal subunit protein uL15.